Here is a 215-residue protein sequence, read N- to C-terminus: FMN-dependent NADH:quinone oxidoreductase (215 aa).

Residue 17–19 (SAS) coordinates FMN.

This sequence belongs to the azoreductase type 1 family. As to quaternary structure, homodimer. FMN serves as cofactor.

It catalyses the reaction 2 a quinone + NADH + H(+) = 2 a 1,4-benzosemiquinone + NAD(+). The enzyme catalyses N,N-dimethyl-1,4-phenylenediamine + anthranilate + 2 NAD(+) = 2-(4-dimethylaminophenyl)diazenylbenzoate + 2 NADH + 2 H(+). Functionally, quinone reductase that provides resistance to thiol-specific stress caused by electrophilic quinones. Its function is as follows. Also exhibits azoreductase activity. Catalyzes the reductive cleavage of the azo bond in aromatic azo compounds to the corresponding amines. In Clostridium botulinum (strain Alaska E43 / Type E3), this protein is FMN-dependent NADH:quinone oxidoreductase.